A 341-amino-acid chain; its full sequence is Holliday junction branch migration complex subunit RuvB (341 aa).

Residues 1–180 (MAKSHTLNPE…FGIQLRLDYY (180 aa)) form a large ATPase domain (RuvB-L) region. ATP contacts are provided by Leu19, Arg20, Gly61, Lys64, Thr65, Thr66, Arg170, Tyr180, and Arg217. Thr65 contacts Mg(2+). Positions 181–251 (NDEEMKQIVL…LCLKAFEKMG (71 aa)) are small ATPAse domain (RuvB-S). Residues 254–341 (DLGLDGMDRQ…VHHGQDPTLF (88 aa)) form a head domain (RuvB-H) region. DNA contacts are provided by Arg309 and Arg314.

This sequence belongs to the RuvB family. In terms of assembly, homohexamer. Forms an RuvA(8)-RuvB(12)-Holliday junction (HJ) complex. HJ DNA is sandwiched between 2 RuvA tetramers; dsDNA enters through RuvA and exits via RuvB. An RuvB hexamer assembles on each DNA strand where it exits the tetramer. Each RuvB hexamer is contacted by two RuvA subunits (via domain III) on 2 adjacent RuvB subunits; this complex drives branch migration. In the full resolvosome a probable DNA-RuvA(4)-RuvB(12)-RuvC(2) complex forms which resolves the HJ.

Its subcellular location is the cytoplasm. The enzyme catalyses ATP + H2O = ADP + phosphate + H(+). Functionally, the RuvA-RuvB-RuvC complex processes Holliday junction (HJ) DNA during genetic recombination and DNA repair, while the RuvA-RuvB complex plays an important role in the rescue of blocked DNA replication forks via replication fork reversal (RFR). RuvA specifically binds to HJ cruciform DNA, conferring on it an open structure. The RuvB hexamer acts as an ATP-dependent pump, pulling dsDNA into and through the RuvAB complex. RuvB forms 2 homohexamers on either side of HJ DNA bound by 1 or 2 RuvA tetramers; 4 subunits per hexamer contact DNA at a time. Coordinated motions by a converter formed by DNA-disengaged RuvB subunits stimulates ATP hydrolysis and nucleotide exchange. Immobilization of the converter enables RuvB to convert the ATP-contained energy into a lever motion, pulling 2 nucleotides of DNA out of the RuvA tetramer per ATP hydrolyzed, thus driving DNA branch migration. The RuvB motors rotate together with the DNA substrate, which together with the progressing nucleotide cycle form the mechanistic basis for DNA recombination by continuous HJ branch migration. Branch migration allows RuvC to scan DNA until it finds its consensus sequence, where it cleaves and resolves cruciform DNA. The chain is Holliday junction branch migration complex subunit RuvB from Leptospira interrogans serogroup Icterohaemorrhagiae serovar copenhageni (strain Fiocruz L1-130).